The sequence spans 151 residues: Allatostatin-A (151 aa).

The N-terminal stretch at 1–21 (MNSLHAHLLLLAVCCVGYIAS) is a signal peptide. A propeptide spanning residues 22 to 54 (SPVIGQDQRSGDSDADVLLAADEMADNGGDNID) is cleaved from the precursor. Residues Leu64, Leu88, and Leu99 each carry the leucine amide modification. Residues 103–135 (SDYDYDQDNEIDYRVPPANYLAAERAVRPGRQN) constitute a propeptide that is removed on maturation. The segment at 131–151 (PGRQNKRTTRPQPFNFGLGRR) is disordered. At Leu148 the chain carries Leucine amide.

This sequence belongs to the allatostatin family.

The protein resides in the secreted. Functionally, may act as a neurotransmitter or neuromodulator. The protein is Allatostatin-A (AstA) of Drosophila melanogaster (Fruit fly).